We begin with the raw amino-acid sequence, 390 residues long: Aspartate beta-hydroxylase domain-containing protein 1 (390 aa).

Residues 1-54 are disordered; sequence MKEGRGSFSVERGPRKERETAQSGMWKGNSPAGSQGAAMEGTGGELGGQGNWGP. Topologically, residues 1 to 72 are cytoplasmic; the sequence is MKEGRGSFSV…RASLIMLPWP (72 aa). Positions 41 to 51 are enriched in gly residues; it reads GTGGELGGQGN. A helical membrane pass occupies residues 73–95; sequence LPLASSALTLLFGALTSLFLWYC. The Lumenal segment spans residues 96–390; that stretch reads YRLGSQDMQA…ALDFVFAPDP (295 aa). A disordered region spans residues 116-143; the sequence is RGGPVGCSEAGGPSPGGPGDPGEGPRTE. Positions 128–137 are enriched in gly residues; sequence PSPGGPGDPG. Position 129 is a phosphoserine (serine 129).

This sequence belongs to the aspartyl/asparaginyl beta-hydroxylase family.

The protein resides in the membrane. This Homo sapiens (Human) protein is Aspartate beta-hydroxylase domain-containing protein 1 (ASPHD1).